Consider the following 173-residue polypeptide: NADH-ubiquinone oxidoreductase chain 6 (173 aa).

5 helical membrane-spanning segments follow: residues 1–21 (MTYFMLFLGLCFVLGGLAVAS), 27–47 (YGVVGLVLASVVGCGWLLSLG), 48–68 (VSFVSLVLFMVYLGGMLVVFV), 87–107 (VVGYGVSFIVVLAAGAVVGGL), and 139–159 (CGVGMFLVAGWGLLLTLFVVL).

The protein belongs to the complex I subunit 6 family.

The protein resides in the mitochondrion membrane. It catalyses the reaction a ubiquinone + NADH + 5 H(+)(in) = a ubiquinol + NAD(+) + 4 H(+)(out). Functionally, core subunit of the mitochondrial membrane respiratory chain NADH dehydrogenase (Complex I) that is believed to belong to the minimal assembly required for catalysis. Complex I functions in the transfer of electrons from NADH to the respiratory chain. The immediate electron acceptor for the enzyme is believed to be ubiquinone. This Synthliboramphus wumizusume (Japanese murrelet) protein is NADH-ubiquinone oxidoreductase chain 6 (MT-ND6).